We begin with the raw amino-acid sequence, 176 residues long: Lipoprotein signal peptidase (176 aa).

4 helical membrane passes run 26 to 46, 60 to 80, 82 to 102, and 107 to 127; these read LWMA…IVIV, FFNL…ADAG, WQRW…VWLL, and GQKL…GNVV. Active-site residues include Asp137 and Asp155. A helical transmembrane segment spans residues 147 to 167; that stretch reads HWPAFNVADCAITVGAVLLIV.

This sequence belongs to the peptidase A8 family.

It is found in the cell inner membrane. The catalysed reaction is Release of signal peptides from bacterial membrane prolipoproteins. Hydrolyzes -Xaa-Yaa-Zaa-|-(S,diacylglyceryl)Cys-, in which Xaa is hydrophobic (preferably Leu), and Yaa (Ala or Ser) and Zaa (Gly or Ala) have small, neutral side chains.. The protein operates within protein modification; lipoprotein biosynthesis (signal peptide cleavage). In terms of biological role, this protein specifically catalyzes the removal of signal peptides from prolipoproteins. In Cupriavidus pinatubonensis (strain JMP 134 / LMG 1197) (Cupriavidus necator (strain JMP 134)), this protein is Lipoprotein signal peptidase.